The primary structure comprises 604 residues: MCGIMGAVSERDISKVLLEGLRRLEYRGYDSAGIAVIDSQDRLKRVRIQGKVQNLADAMQETAIAGNTGIAHTRWATHGKPSEQNAHPHLSHGEIALVHNGIIENHEHLRQQLITYGYQFTSETDTEVAAHLIHYHYQQHENLLLAVQKSAAEMQGAFALGVIHQKRPEELVAIRKGSPLVLGFGIGENFIASDALALRSFAQSVIYMEEGDSACVTTQDIKVYDSNRILVQRATHPLNSDSEIVNKGPYRHFMLKEIFEQSKVITDTLESRINSIDVLRASFGEKASHIFPMVKNIHIVACGTSYHAGMIAKYWLESLAGLPTQVEIASEYRYRDVVVPDNTLFITVSQSGETADTLAALFKAKQSNYLASLAICNVATSTLVREADCVFLTRAGIEIGVASTKAFTTQLAAFLMLAAALCKDNRAQEVLRQLQELPACCERVLQMNEEVESLASLFVNKVHALFLGRGVQYPVALEGALKLKEISYIHAEAYPAGELKHGPLALVDKDMPVIAVAPNDELLDKLKSNLHEVSARGGQLFVFVDDSQNWKANGARLIKVPSCGAWLAPIIYTIPLQLLAYHVAVAKGTDVDQPRNLAKSVTVE.

C2 acts as the Nucleophile; for GATase activity in catalysis. The 218-residue stretch at 2–219 (CGIMGAVSER…EGDSACVTTQ (218 aa)) folds into the Glutamine amidotransferase type-2 domain. SIS domains follow at residues 279 to 427 (LRAS…DNRA) and 454 to 594 (LASL…VDQP). K599 acts as the For Fru-6P isomerization activity in catalysis.

Homodimer.

The protein resides in the cytoplasm. It carries out the reaction D-fructose 6-phosphate + L-glutamine = D-glucosamine 6-phosphate + L-glutamate. Its function is as follows. Catalyzes the first step in hexosamine metabolism, converting fructose-6P into glucosamine-6P using glutamine as a nitrogen source. This is Glutamine--fructose-6-phosphate aminotransferase [isomerizing] from Legionella pneumophila (strain Lens).